The sequence spans 408 residues: 3-ketoacyl-CoA thiolase B, peroxisomal (408 aa).

The Acyl-thioester intermediate role is filled by cysteine 112. Residues histidine 366 and cysteine 394 each act as proton acceptor in the active site.

This sequence belongs to the thiolase-like superfamily. Thiolase family. As to quaternary structure, homodimer.

The protein resides in the peroxisome. It carries out the reaction an acyl-CoA + acetyl-CoA = a 3-oxoacyl-CoA + CoA. The protein operates within lipid metabolism; fatty acid metabolism. The chain is 3-ketoacyl-CoA thiolase B, peroxisomal from Candida tropicalis (Yeast).